A 62-amino-acid chain; its full sequence is Photosystem II reaction center protein Z (62 aa).

2 helical membrane passes run 8–28 (SVFA…VVLA) and 41–61 (FSGA…NSFI).

It belongs to the PsbZ family. As to quaternary structure, PSII is composed of 1 copy each of membrane proteins PsbA, PsbB, PsbC, PsbD, PsbE, PsbF, PsbH, PsbI, PsbJ, PsbK, PsbL, PsbM, PsbT, PsbY, PsbZ, Psb30/Ycf12, at least 3 peripheral proteins of the oxygen-evolving complex and a large number of cofactors. It forms dimeric complexes.

It localises to the plastid. The protein localises to the chloroplast thylakoid membrane. In terms of biological role, may control the interaction of photosystem II (PSII) cores with the light-harvesting antenna, regulates electron flow through the 2 photosystem reaction centers. PSII is a light-driven water plastoquinone oxidoreductase, using light energy to abstract electrons from H(2)O, generating a proton gradient subsequently used for ATP formation. In Staurastrum punctulatum (Green alga), this protein is Photosystem II reaction center protein Z.